The following is a 105-amino-acid chain: Protein U4 (105 aa).

The chain crosses the membrane as a helical span at residues 5-25; the sequence is FLLFLLLLVLVINPSLVVNMV.

Belongs to the nanovirus U4 protein family.

Its subcellular location is the membrane. The chain is Protein U4 (DNA-U4) from Faba bean necrotic yellows virus (isolate Egyptian EV1-93) (FBNYV).